A 476-amino-acid polypeptide reads, in one-letter code: Aspartyl/glutamyl-tRNA(Asn/Gln) amidotransferase subunit B (476 aa).

The protein belongs to the GatB/GatE family. GatB subfamily. As to quaternary structure, heterotrimer of A, B and C subunits.

It catalyses the reaction L-glutamyl-tRNA(Gln) + L-glutamine + ATP + H2O = L-glutaminyl-tRNA(Gln) + L-glutamate + ADP + phosphate + H(+). The catalysed reaction is L-aspartyl-tRNA(Asn) + L-glutamine + ATP + H2O = L-asparaginyl-tRNA(Asn) + L-glutamate + ADP + phosphate + 2 H(+). In terms of biological role, allows the formation of correctly charged Asn-tRNA(Asn) or Gln-tRNA(Gln) through the transamidation of misacylated Asp-tRNA(Asn) or Glu-tRNA(Gln) in organisms which lack either or both of asparaginyl-tRNA or glutaminyl-tRNA synthetases. The reaction takes place in the presence of glutamine and ATP through an activated phospho-Asp-tRNA(Asn) or phospho-Glu-tRNA(Gln). In Laribacter hongkongensis (strain HLHK9), this protein is Aspartyl/glutamyl-tRNA(Asn/Gln) amidotransferase subunit B.